The chain runs to 508 residues: Ribonuclease Y (508 aa).

The helical transmembrane segment at 2–22 (IITALIAIAVGFLIGYLARKI) threads the bilayer. Residues 198–261 (TVSVVTLPND…EVARIALEKL (64 aa)) enclose the KH domain. Residues 324–417 (VLKHSIEVAH…VQAADAISAA (94 aa)) enclose the HD domain.

This sequence belongs to the RNase Y family.

It localises to the cell membrane. Endoribonuclease that initiates mRNA decay. The chain is Ribonuclease Y from Thermoanaerobacter pseudethanolicus (strain ATCC 33223 / 39E) (Clostridium thermohydrosulfuricum).